A 326-amino-acid chain; its full sequence is Protein-ribulosamine 3-kinase, chloroplastic (326 aa).

The N-terminal 30 residues, 1-30 (MAVASLSICFSARPHLLLRNFSPRPKFVAM), are a transit peptide targeting the chloroplast. 125–127 (EFI) is a binding site for ATP. Residue D230 is the Proton acceptor of the active site.

The protein belongs to the fructosamine kinase family.

It localises to the plastid. Its subcellular location is the chloroplast. It catalyses the reaction N(6)-D-ribulosyl-L-lysyl-[protein] + ATP = N(6)-(3-O-phospho-D-ribulosyl)-L-lysyl-[protein] + ADP + H(+). The enzyme catalyses N(6)-(D-erythrulosyl)-L-lysyl-[protein] + ATP = N(6)-(3-O-phospho-D-erythrulosyl)-L-lysyl-[protein] + ADP + H(+). Initiates a process leading to the deglycation of proteins. Phosphorylates low-molecular-mass and protein-bound erythrulosamines and ribulosamines, but not fructosamines or psicosamines, on the third carbon of the sugar moiety. Protein-bound erythrulosamine 3-phosphates and ribulosamine 3-phosphates are unstable and decompose under physiological conditions. The protein is Protein-ribulosamine 3-kinase, chloroplastic of Arabidopsis thaliana (Mouse-ear cress).